We begin with the raw amino-acid sequence, 420 residues long: Argininosuccinate synthase (420 aa).

23–31 (AYSGGLDTS) lines the ATP pocket. Position 102 (Y102) interacts with L-citrulline. G132 lines the ATP pocket. L-aspartate-binding residues include T134, N138, and D139. N138 is an L-citrulline binding site. 4 residues coordinate L-citrulline: R142, S190, E274, and Y286.

Belongs to the argininosuccinate synthase family. Type 1 subfamily. Homotetramer.

The protein resides in the cytoplasm. It carries out the reaction L-citrulline + L-aspartate + ATP = 2-(N(omega)-L-arginino)succinate + AMP + diphosphate + H(+). It participates in amino-acid biosynthesis; L-arginine biosynthesis; L-arginine from L-ornithine and carbamoyl phosphate: step 2/3. This Renibacterium salmoninarum (strain ATCC 33209 / DSM 20767 / JCM 11484 / NBRC 15589 / NCIMB 2235) protein is Argininosuccinate synthase.